The sequence spans 453 residues: 3-phosphoshikimate 1-carboxyvinyltransferase (453 aa).

Residues 1-25 (MSHDSEPQPVTAHPAGPLTGALKPP) form a disordered region. 3 residues coordinate 3-phosphoshikimate: Lys-28, Ser-29, and Arg-33. Lys-28 is a phosphoenolpyruvate binding site. 2 residues coordinate phosphoenolpyruvate: Gly-101 and Arg-129. The 3-phosphoshikimate site is built by Ser-175, Gln-177, Asp-330, and Lys-357. Residue Gln-177 coordinates phosphoenolpyruvate. The Proton acceptor role is filled by Asp-330. Phosphoenolpyruvate-binding residues include Arg-361 and Arg-405.

Belongs to the EPSP synthase family. In terms of assembly, monomer.

The protein resides in the cytoplasm. It catalyses the reaction 3-phosphoshikimate + phosphoenolpyruvate = 5-O-(1-carboxyvinyl)-3-phosphoshikimate + phosphate. Its pathway is metabolic intermediate biosynthesis; chorismate biosynthesis; chorismate from D-erythrose 4-phosphate and phosphoenolpyruvate: step 6/7. Its function is as follows. Catalyzes the transfer of the enolpyruvyl moiety of phosphoenolpyruvate (PEP) to the 5-hydroxyl of shikimate-3-phosphate (S3P) to produce enolpyruvyl shikimate-3-phosphate and inorganic phosphate. The chain is 3-phosphoshikimate 1-carboxyvinyltransferase from Methylorubrum populi (strain ATCC BAA-705 / NCIMB 13946 / BJ001) (Methylobacterium populi).